The sequence spans 90 residues: Small ribosomal subunit protein uS15c (90 aa).

This sequence belongs to the universal ribosomal protein uS15 family. Part of the 30S ribosomal subunit.

The protein localises to the plastid. It is found in the chloroplast. The chain is Small ribosomal subunit protein uS15c (rps15) from Populus alba (White poplar).